Here is a 549-residue protein sequence, read N- to C-terminus: Glucose-6-phosphate isomerase (549 aa).

E355 functions as the Proton donor in the catalytic mechanism. Active-site residues include H386 and K514.

The protein belongs to the GPI family.

It is found in the cytoplasm. It carries out the reaction alpha-D-glucose 6-phosphate = beta-D-fructose 6-phosphate. It functions in the pathway carbohydrate biosynthesis; gluconeogenesis. It participates in carbohydrate degradation; glycolysis; D-glyceraldehyde 3-phosphate and glycerone phosphate from D-glucose: step 2/4. Catalyzes the reversible isomerization of glucose-6-phosphate to fructose-6-phosphate. The protein is Glucose-6-phosphate isomerase of Salmonella paratyphi A (strain AKU_12601).